Reading from the N-terminus, the 154-residue chain is UPF0756 membrane protein BLi03063/BL00400 (154 aa).

4 helical membrane passes run 8–28, 54–74, 87–107, and 117–137; these read FLIL…IIAV, WGVT…EIGF, WIAL…ITLL, and LVFG…GPLI.

The protein belongs to the UPF0756 family.

It is found in the cell membrane. The protein is UPF0756 membrane protein BLi03063/BL00400 of Bacillus licheniformis (strain ATCC 14580 / DSM 13 / JCM 2505 / CCUG 7422 / NBRC 12200 / NCIMB 9375 / NCTC 10341 / NRRL NRS-1264 / Gibson 46).